Consider the following 662-residue polypeptide: Methyl-accepting chemotaxis protein McpB (662 aa).

The Cytoplasmic portion of the chain corresponds to 1-16 (MKTFINWLKKPSISKK). Residues 17–37 (LIVSFIAILIIPILILEFSSY) traverse the membrane as a helical segment. At 38–282 (RSASGKLDQE…IKDASKSVLT (245 aa)) the chain is on the extracellular side. The region spanning 153 to 229 (VTDPYVAASD…KAGEKLSGDW (77 aa)) is the Cache domain. A helical transmembrane segment spans residues 283–303 (TGMIVLIASIVAGGILILFIV). Residues 304-356 (RSITKPLKRLVQSSKTISRGDLTETIEIHSKDELGELGESFNEMGQSLRSLIS) form the HAMP domain. Residues 304-662 (RSITKPLKRL…RDLTKQFKIE (359 aa)) are Cytoplasmic-facing. 2 positions are modified to glutamate methyl ester (Gln): glutamine 371 and glutamine 595. In terms of domain architecture, Methyl-accepting transducer spans 375–611 (SAGQTSKATE…HVSAAVSGIA (237 aa)). Glutamate 630 and glutamate 637 each carry glutamate methyl ester (Glu).

Belongs to the methyl-accepting chemotaxis (MCP) protein family. As to quaternary structure, interacts with FloT. In terms of processing, some glutamine residues are deamidated to glutamate by CheD and subsequently methylated. The demethylation is selective. Gln-371 is demethylated only upon asparagine addition whereas Glu-637 is demethylated only upon asparagine removal. Glu-630 appears indiscriminate and is demethylated upon both addition and removal of asparagine.

The protein localises to the cell membrane. It localises to the membrane raft. Chemotactic-signal transducers respond to changes in the concentration of attractants and repellents in the environment, transduce a signal from the outside to the inside of the cell, and facilitate sensory adaptation through the variation of the level of methylation. All amino acids serve as attractants in B.subtilis, they appear to cause an increase in the turnover methyl groups, leading to methylation of an unidentified acceptor, while repellents have been shown to cause a decrease in methyl group turnover. The methyl groups are added by a methyltransferase and removed by a methylesterase. McpB is required for taxis towards asparagine, aspartate, glutamine, and histidine. The protein is Methyl-accepting chemotaxis protein McpB (mcpB) of Bacillus subtilis (strain 168).